The primary structure comprises 513 residues: 2-isopropylmalate synthase (513 aa).

The Pyruvate carboxyltransferase domain maps to 4-268; that stretch reads IKIFDTTLRD…ETGIRTELIY (265 aa). Residues D13, H203, H205, and N239 each contribute to the Mn(2+) site. The interval 392–513 is regulatory domain; it reads RLVHFHVHTG…GLLRKNGGVE (122 aa).

It belongs to the alpha-IPM synthase/homocitrate synthase family. LeuA type 1 subfamily. Homodimer. Mn(2+) is required as a cofactor.

The protein localises to the cytoplasm. The catalysed reaction is 3-methyl-2-oxobutanoate + acetyl-CoA + H2O = (2S)-2-isopropylmalate + CoA + H(+). It participates in amino-acid biosynthesis; L-leucine biosynthesis; L-leucine from 3-methyl-2-oxobutanoate: step 1/4. Catalyzes the condensation of the acetyl group of acetyl-CoA with 3-methyl-2-oxobutanoate (2-ketoisovalerate) to form 3-carboxy-3-hydroxy-4-methylpentanoate (2-isopropylmalate). The chain is 2-isopropylmalate synthase from Thermotoga neapolitana (strain ATCC 49049 / DSM 4359 / NBRC 107923 / NS-E).